The following is a 263-amino-acid chain: MSPMNAFDPQAEDSTTTIGRNLRSRPLARKKLSEMVEEELEQMIRRREFGEGEQLPSERELMAFFNVGRPSVREALAALKRKGLVQINNGERARVSRPSADTIIGELSGMAKDFLSHPGGIAHFEQLRLFFESSLVRYAAEHATDEQIDLLAKALEINSQSLDNNAAFIRSDVDFHRVLAEIPGNPIFMAIHVALLDWLIAARPTVADQALHEHNNVSYQQHIAIVDAIRRHDPDEADRALQSHLNSVSATWHAFGQTTNKKK.

The interval M1–R23 is disordered. The HTH gntR-type domain occupies K30–P98. The segment at residues E58 to A77 is a DNA-binding region (H-T-H motif).

This sequence belongs to the NanR family.

In terms of biological role, transcriptional repressor that controls expression of the genes required for the catabolism of sialic acids. The sequence is that of HTH-type transcriptional repressor NanR from Escherichia coli O45:K1 (strain S88 / ExPEC).